The sequence spans 251 residues: 2,3-bisphosphoglycerate-dependent phosphoglycerate mutase (251 aa).

Substrate-binding positions include 8–15 (RHGESLWN), 21–22 (TG), Arg60, 87–90 (ERHY), Lys98, 114–115 (RR), and 183–184 (GN). The Tele-phosphohistidine intermediate role is filled by His9. The active-site Proton donor/acceptor is the Glu87.

It belongs to the phosphoglycerate mutase family. BPG-dependent PGAM subfamily.

The catalysed reaction is (2R)-2-phosphoglycerate = (2R)-3-phosphoglycerate. The protein operates within carbohydrate degradation; glycolysis; pyruvate from D-glyceraldehyde 3-phosphate: step 3/5. Functionally, catalyzes the interconversion of 2-phosphoglycerate and 3-phosphoglycerate. The chain is 2,3-bisphosphoglycerate-dependent phosphoglycerate mutase from Thermoanaerobacter pseudethanolicus (strain ATCC 33223 / 39E) (Clostridium thermohydrosulfuricum).